A 437-amino-acid polypeptide reads, in one-letter code: Aspartate--tRNA(Asp/Asn) ligase (437 aa).

Residue E175 participates in L-aspartate binding. An aspartate region spans residues 197 to 200 (QLYK). R219 contacts L-aspartate. ATP-binding positions include 219 to 221 (RAE), 227 to 229 (RHL), and E360. Positions 360 and 363 each coordinate Mg(2+). 2 residues coordinate L-aspartate: S363 and R367. ATP is bound at residue 408–411 (GAER).

Belongs to the class-II aminoacyl-tRNA synthetase family. Type 2 subfamily. In terms of assembly, homodimer. The cofactor is Mg(2+).

Its subcellular location is the cytoplasm. The catalysed reaction is tRNA(Asx) + L-aspartate + ATP = L-aspartyl-tRNA(Asx) + AMP + diphosphate. In terms of biological role, aspartyl-tRNA synthetase with relaxed tRNA specificity since it is able to aspartylate not only its cognate tRNA(Asp) but also tRNA(Asn). Reaction proceeds in two steps: L-aspartate is first activated by ATP to form Asp-AMP and then transferred to the acceptor end of tRNA(Asp/Asn). This Methanothermobacter thermautotrophicus (strain ATCC 29096 / DSM 1053 / JCM 10044 / NBRC 100330 / Delta H) (Methanobacterium thermoautotrophicum) protein is Aspartate--tRNA(Asp/Asn) ligase.